A 431-amino-acid polypeptide reads, in one-letter code: Enolase (431 aa).

Glutamine 167 lines the (2R)-2-phosphoglycerate pocket. Glutamate 209 functions as the Proton donor in the catalytic mechanism. Mg(2+) contacts are provided by aspartate 246, glutamate 289, and aspartate 316. Positions 341, 370, 371, and 392 each coordinate (2R)-2-phosphoglycerate. Catalysis depends on lysine 341, which acts as the Proton acceptor.

It belongs to the enolase family. As to quaternary structure, component of the RNA degradosome, a multiprotein complex involved in RNA processing and mRNA degradation. It depends on Mg(2+) as a cofactor.

It localises to the cytoplasm. Its subcellular location is the secreted. The protein localises to the cell surface. It carries out the reaction (2R)-2-phosphoglycerate = phosphoenolpyruvate + H2O. It participates in carbohydrate degradation; glycolysis; pyruvate from D-glyceraldehyde 3-phosphate: step 4/5. In terms of biological role, catalyzes the reversible conversion of 2-phosphoglycerate (2-PG) into phosphoenolpyruvate (PEP). It is essential for the degradation of carbohydrates via glycolysis. The polypeptide is Enolase (Shewanella sp. (strain ANA-3)).